Here is a 362-residue protein sequence, read N- to C-terminus: MAQVFNFSSGPAMLPAEVLKLAQQELRDWHGLGTSVMEISHRGKEFIQVAEEAEQDFRDLLNIPSNYKVLFCHGGGRGQFAGVPLNLLGDKTTADYVDAGYWAASAIKEAKKYCAPQIIDAKITVDGKRAVKPMREWQLSDNAAYLHYCPNETIDGIAIDETPDFGPEVVVTADFSSTILSAPLDVSRYGVIYAGAQKNIGPAGLTLVIVREDLLGKAHESCPSILDYTVLNDNDSMFNTPPTFAWYLSGLVFKWLKAQGGVAAMHKINQQKAELLYGVIDNSDFYRNDVAQANRSRMNVPFQLADNALDKVFLEESFAAGLHALKGHRVVGGMRASIYNAMPIEGVKALTDFMIDFERRHG.

L-glutamate contacts are provided by Ser9 and Arg42. Pyridoxal 5'-phosphate-binding positions include Gly76–Arg77, Trp102, Thr153, Asp174, and Gln197. Lys198 bears the N6-(pyridoxal phosphate)lysine mark. Residue Asn239 to Thr240 coordinates pyridoxal 5'-phosphate.

This sequence belongs to the class-V pyridoxal-phosphate-dependent aminotransferase family. SerC subfamily. As to quaternary structure, homodimer. Pyridoxal 5'-phosphate serves as cofactor.

The protein localises to the cytoplasm. It carries out the reaction O-phospho-L-serine + 2-oxoglutarate = 3-phosphooxypyruvate + L-glutamate. It catalyses the reaction 4-(phosphooxy)-L-threonine + 2-oxoglutarate = (R)-3-hydroxy-2-oxo-4-phosphooxybutanoate + L-glutamate. It participates in amino-acid biosynthesis; L-serine biosynthesis; L-serine from 3-phospho-D-glycerate: step 2/3. The protein operates within cofactor biosynthesis; pyridoxine 5'-phosphate biosynthesis; pyridoxine 5'-phosphate from D-erythrose 4-phosphate: step 3/5. Its function is as follows. Catalyzes the reversible conversion of 3-phosphohydroxypyruvate to phosphoserine and of 3-hydroxy-2-oxo-4-phosphonooxybutanoate to phosphohydroxythreonine. This is Phosphoserine aminotransferase from Salmonella agona (strain SL483).